Consider the following 132-residue polypeptide: MIFGIGTDICDIRRLRATYARRGERFAEKVLGPQELEVFRYRLAKVEARGLSYLATRFSAKEAFSKAIGTGMRTPMSWRACQILNARSGKPEIRLHGPLAAWFEAQGLRAHVSVTDETDYAASFVVVETQET.

Mg(2+)-binding residues include Asp8 and Glu62.

It belongs to the P-Pant transferase superfamily. AcpS family. Mg(2+) serves as cofactor.

Its subcellular location is the cytoplasm. It catalyses the reaction apo-[ACP] + CoA = holo-[ACP] + adenosine 3',5'-bisphosphate + H(+). In terms of biological role, transfers the 4'-phosphopantetheine moiety from coenzyme A to a Ser of acyl-carrier-protein. In Methylibium petroleiphilum (strain ATCC BAA-1232 / LMG 22953 / PM1), this protein is Holo-[acyl-carrier-protein] synthase.